The sequence spans 534 residues: Probable protein kinase UbiB (534 aa).

Residues aspartate 23–tryptophan 43 form a helical membrane-spanning segment. The Protein kinase domain maps to arginine 125 to leucine 492. Residues leucine 131–valine 139 and lysine 153 each bind ATP. Aspartate 288 (proton acceptor) is an active-site residue. The next 2 membrane-spanning stretches (helical) occupy residues tryptophan 490–glycine 510 and leucine 512–valine 532.

The protein belongs to the ABC1 family. UbiB subfamily.

Its subcellular location is the cell inner membrane. The protein operates within cofactor biosynthesis; ubiquinone biosynthesis [regulation]. Is probably a protein kinase regulator of UbiI activity which is involved in aerobic coenzyme Q (ubiquinone) biosynthesis. This is Probable protein kinase UbiB from Pseudomonas fluorescens (strain Pf0-1).